The sequence spans 115 residues: Putative type I restriction enzyme MpnIIP endonuclease subunit middle part (115 aa).

Its function is as follows. The middle section of a putative type I restriction enzyme that if reconstituted might recognize 5'-GAN(7)TAY-3' and cleave a random distance away. Subunit R is required for both nuclease and ATPase activities, but not for modification. This Mycoplasma pneumoniae (strain ATCC 29342 / M129 / Subtype 1) (Mycoplasmoides pneumoniae) protein is Putative type I restriction enzyme MpnIIP endonuclease subunit middle part.